Consider the following 229-residue polypeptide: Flagellar L-ring protein (229 aa).

Positions 1 to 23 are cleaved as a signal peptide; sequence MLSRLGARALVCLAGVAMLAASG. A lipid anchor (N-palmitoyl cysteine) is attached at Cys24. Residue Cys24 is the site of S-diacylglycerol cysteine attachment.

Belongs to the FlgH family. The basal body constitutes a major portion of the flagellar organelle and consists of four rings (L,P,S, and M) mounted on a central rod.

The protein resides in the cell outer membrane. It is found in the bacterial flagellum basal body. Functionally, assembles around the rod to form the L-ring and probably protects the motor/basal body from shearing forces during rotation. In Cupriavidus taiwanensis (strain DSM 17343 / BCRC 17206 / CCUG 44338 / CIP 107171 / LMG 19424 / R1) (Ralstonia taiwanensis (strain LMG 19424)), this protein is Flagellar L-ring protein.